The sequence spans 34 residues: Photosystem II reaction center protein M (34 aa).

A helical transmembrane segment spans residues 5–25 (ILAFIATALFILIPTAFLLIL).

Belongs to the PsbM family. In terms of assembly, PSII is composed of 1 copy each of membrane proteins PsbA, PsbB, PsbC, PsbD, PsbE, PsbF, PsbH, PsbI, PsbJ, PsbK, PsbL, PsbM, PsbT, PsbX, PsbY, PsbZ, Psb30/Ycf12, at least 3 peripheral proteins of the oxygen-evolving complex and a large number of cofactors. It forms dimeric complexes.

It is found in the plastid. It localises to the chloroplast thylakoid membrane. Functionally, one of the components of the core complex of photosystem II (PSII). PSII is a light-driven water:plastoquinone oxidoreductase that uses light energy to abstract electrons from H(2)O, generating O(2) and a proton gradient subsequently used for ATP formation. It consists of a core antenna complex that captures photons, and an electron transfer chain that converts photonic excitation into a charge separation. This subunit is found at the monomer-monomer interface. In Anthoceros angustus (Hornwort), this protein is Photosystem II reaction center protein M.